A 394-amino-acid chain; its full sequence is Phosphoglycerate kinase (394 aa).

Residues 21–23, Arg-36, 59–62, Arg-118, and Arg-151 contribute to the substrate site; these read DFN and HFGR. Residues Lys-201, Glu-323, and 349-352 each bind ATP; that span reads GGDS.

It belongs to the phosphoglycerate kinase family. In terms of assembly, monomer.

The protein localises to the cytoplasm. It carries out the reaction (2R)-3-phosphoglycerate + ATP = (2R)-3-phospho-glyceroyl phosphate + ADP. It functions in the pathway carbohydrate degradation; glycolysis; pyruvate from D-glyceraldehyde 3-phosphate: step 2/5. This chain is Phosphoglycerate kinase, found in Brevibacillus brevis (strain 47 / JCM 6285 / NBRC 100599).